The following is a 1083-amino-acid chain: Regulator of the glycerol channel 1 (1083 aa).

Disordered regions lie at residues 1 to 46 (MSDY…GSSD) and 69 to 89 (LKNE…KENK). Polar residues predominate over residues 13 to 31 (GGISKQPATPGSTRSSSRN). Ser-136, Ser-249, Ser-252, Ser-481, and Ser-537 each carry phosphoserine. Positions 495 to 606 (CIRVGYLLKK…DCSLKDSTDS (112 aa)) constitute a PH domain. Residues 534-582 (DSKSPRSKNKPVVEQSDISRVNKDGTNAGSHPSSKGTQDPKLTKRRKGL) form a disordered region. Positions 549–570 (SDISRVNKDGTNAGSHPSSKGT) are enriched in polar residues. Ser-652, Ser-765, and Ser-813 each carry phosphoserine. Residues Thr-817 and Thr-857 each carry the phosphothreonine modification. Phosphoserine is present on residues Ser-866, Ser-879, Ser-918, Ser-966, Ser-969, and Ser-975. The disordered stretch occupies residues 979 to 1083 (EENRTQNCSG…TVPATSASSK (105 aa)). 3 stretches are compositionally biased toward polar residues: residues 983 to 992 (TQNCSGSRKS), 1043 to 1061 (LKKT…VSND), and 1071 to 1083 (STNT…ASSK). A phosphoserine mark is found at Ser-1059, Ser-1081, and Ser-1082.

This sequence belongs to the RGC1 family.

It is found in the cytoplasm. Functionally, positive regulator of FPS1 glycerol channel required for the glycerol efflux. The sequence is that of Regulator of the glycerol channel 1 (RGC1) from Saccharomyces cerevisiae (strain ATCC 204508 / S288c) (Baker's yeast).